We begin with the raw amino-acid sequence, 603 residues long: Elongation factor 4 (603 aa).

The region spanning 7–189 (SHIRNFSIIA…SIVHLVPPPR (183 aa)) is the tr-type G domain. Residues 19–24 (DHGKST) and 136–139 (NKID) each bind GTP.

It belongs to the TRAFAC class translation factor GTPase superfamily. Classic translation factor GTPase family. LepA subfamily.

Its subcellular location is the cell inner membrane. The catalysed reaction is GTP + H2O = GDP + phosphate + H(+). Its function is as follows. Required for accurate and efficient protein synthesis under certain stress conditions. May act as a fidelity factor of the translation reaction, by catalyzing a one-codon backward translocation of tRNAs on improperly translocated ribosomes. Back-translocation proceeds from a post-translocation (POST) complex to a pre-translocation (PRE) complex, thus giving elongation factor G a second chance to translocate the tRNAs correctly. Binds to ribosomes in a GTP-dependent manner. The sequence is that of Elongation factor 4 from Thermosynechococcus vestitus (strain NIES-2133 / IAM M-273 / BP-1).